A 149-amino-acid chain; its full sequence is FKBP-type 16 kDa peptidyl-prolyl cis-trans isomerase (149 aa).

A PPIase FKBP-type domain is found at 2 to 72; it reads SESVQSNSAV…FSLEPDAAFG (71 aa).

The protein belongs to the FKBP-type PPIase family.

It catalyses the reaction [protein]-peptidylproline (omega=180) = [protein]-peptidylproline (omega=0). Its function is as follows. PPIases accelerate the folding of proteins. Substrate specificity carried out with 'Suc-Ala-Xaa-Pro-Phe-4-nitroanilide', where Xaa is the amino acid tested, was found to be Phe &gt; Leu &gt;&gt; Ile &gt; Lys = Ala &gt; Trp &gt; His &gt;&gt; Gln. The polypeptide is FKBP-type 16 kDa peptidyl-prolyl cis-trans isomerase (fkpB) (Escherichia coli O6:H1 (strain CFT073 / ATCC 700928 / UPEC)).